The sequence spans 201 residues: Holliday junction branch migration complex subunit RuvA (201 aa).

The interval 1–63 (MIEFVRGYVD…EDTLALYGFR (63 aa)) is domain I. Residues 64–142 (TREERTLFAK…AVTAKTFPDL (79 aa)) form a domain II region. A flexible linker region spans residues 143 to 153 (FHLQEESARPH). The segment at 153-201 (HLSALEEAIEALKALGYAEREIQKVVPSLMKENLSTDQYVKRALQQLLK) is domain III.

It belongs to the RuvA family. In terms of assembly, homotetramer. Forms an RuvA(8)-RuvB(12)-Holliday junction (HJ) complex. HJ DNA is sandwiched between 2 RuvA tetramers; dsDNA enters through RuvA and exits via RuvB. An RuvB hexamer assembles on each DNA strand where it exits the tetramer. Each RuvB hexamer is contacted by two RuvA subunits (via domain III) on 2 adjacent RuvB subunits; this complex drives branch migration. In the full resolvosome a probable DNA-RuvA(4)-RuvB(12)-RuvC(2) complex forms which resolves the HJ.

The protein resides in the cytoplasm. In terms of biological role, the RuvA-RuvB-RuvC complex processes Holliday junction (HJ) DNA during genetic recombination and DNA repair, while the RuvA-RuvB complex plays an important role in the rescue of blocked DNA replication forks via replication fork reversal (RFR). RuvA specifically binds to HJ cruciform DNA, conferring on it an open structure. The RuvB hexamer acts as an ATP-dependent pump, pulling dsDNA into and through the RuvAB complex. HJ branch migration allows RuvC to scan DNA until it finds its consensus sequence, where it cleaves and resolves the cruciform DNA. The polypeptide is Holliday junction branch migration complex subunit RuvA (Geobacillus sp. (strain WCH70)).